Consider the following 108-residue polypeptide: Nucleoid-associated protein PSHAa1202 (108 aa).

2 disordered regions span residues 1-20 (MFKG…QDRM) and 87-108 (TQER…KMPF).

Belongs to the YbaB/EbfC family. As to quaternary structure, homodimer.

Its subcellular location is the cytoplasm. It is found in the nucleoid. Functionally, binds to DNA and alters its conformation. May be involved in regulation of gene expression, nucleoid organization and DNA protection. The protein is Nucleoid-associated protein PSHAa1202 of Pseudoalteromonas translucida (strain TAC 125).